The primary structure comprises 99 residues: U2-theraphotoxin-Lsp1a (99 aa).

The first 22 residues, 1-22, serve as a signal peptide directing secretion; that stretch reads MNTIQVIIFAVVLVLTVTVGQA. The propeptide occupies 23 to 57; that stretch reads DEDSPEASLLRKLKEAEASLFGQNLEESRNSRQKR. 3 disulfide bridges follow: Cys58/Cys73, Cys65/Cys78, and Cys72/Cys93.

It belongs to the neurotoxin 14 (magi-1) family. 08 (Ltx-4) subfamily. Expressed by the venom gland.

It localises to the secreted. Its function is as follows. Insecticidal neurotoxin. The protein is U2-theraphotoxin-Lsp1a of Lasiodora sp. (strain IBSP 8539) (Brazilian salmon pink birdeater).